A 735-amino-acid chain; its full sequence is Zinc finger CCCH domain-containing protein 14 (735 aa).

Met1 carries the post-translational modification N-acetylmethionine. The interval 78-153 (TEPSSLKSPD…RHSYDDGAST (76 aa)) is disordered. Ser85 is modified (phosphoserine). Glycyl lysine isopeptide (Lys-Gly) (interchain with G-Cter in SUMO2) cross-links involve residues Lys99, Lys139, Lys175, and Lys198. Residues 131–144 (VSTSSQEQKSTNVR) show a composition bias toward polar residues. Phosphoserine is present on Ser240. Residues Lys245, Lys283, and Lys295 each participate in a glycyl lysine isopeptide (Lys-Gly) (interchain with G-Cter in SUMO2) cross-link. Positions 308–351 (FSHDGEEEEEDEDYGTRIGSLSSSVSVPAKPERRPSLPPSKQAN) are disordered. Phosphoserine occurs at positions 309, 327, and 343. The residue at position 357 (Lys357) is an N6-acetyllysine; alternate. Residue Lys357 forms a Glycyl lysine isopeptide (Lys-Gly) (interchain with G-Cter in SUMO2); alternate linkage. Lys378 participates in a covalent cross-link: Glycyl lysine isopeptide (Lys-Gly) (interchain with G-Cter in SUMO2). Phosphoserine is present on residues Ser390 and Ser409. Positions 399 to 431 (VQGQNRAPRISPPVKEEEAKGDNTGKSQGTQQR) are disordered. Over residues 412-421 (VKEEEAKGDN) the composition is skewed to basic and acidic residues. Residue Lys413 forms a Glycyl lysine isopeptide (Lys-Gly) (interchain with G-Cter in SUMO2) linkage. Residues 422-431 (TGKSQGTQQR) show a composition bias toward polar residues. Lys489 participates in a covalent cross-link: Glycyl lysine isopeptide (Lys-Gly) (interchain with G-Cter in SUMO2). 4 positions are modified to phosphoserine: Ser498, Ser515, Ser527, and Ser620. C3H1-type zinc fingers lie at residues 595-620 (EKLL…HPIS), 621-640 (PCKA…VHPN), 641-656 (CKYD…PFTH), 681-698 (CRYF…YHPK), and 700-718 (CRFN…HPTI).

The protein belongs to the ZC3H14 family. As to quaternary structure, homodimer; facilitating circular RNAs (circRNAs) formation. Associates with the spliceosome. Interacts with HOOK2. Interacts with ZFC3H1 in a RNase-sensitive manner. In terms of tissue distribution, expressed in hippocampal pyramidal neurons (at protein level). Expressed in kidney, liver, muscle, heart brain and testes. Expressed in hippocampal pyramidal neurons.

It localises to the nucleus speckle. Its function is as follows. RNA-binding protein involved in the biogenesis of circular RNAs (circRNAs), which are produced by back-splicing circularization of pre-mRNAs. Acts by binding to both exon-intron boundary and 3'-UTR of pre-mRNAs to promote circRNA biogenesis through dimerization and the association with the spliceosome. Required for spermatogenesis via involvement in circRNA biogenesis. Regulates the pre-mRNA processing of ATP5MC1; preventing its degradation. Also binds the poly(A) tail of mRNAs; controlling poly(A) length in neuronal cells. The polypeptide is Zinc finger CCCH domain-containing protein 14 (Mus musculus (Mouse)).